A 113-amino-acid chain; its full sequence is Probable 4-amino-4-deoxy-L-arabinose-phosphoundecaprenol flippase subunit ArnE (113 aa).

A run of 3 helical transmembrane segments spans residues 39–59, 62–82, and 91–111; these read IFWL…WLRL, ILPL…VTLI, and VNVK…LMSM. An EamA domain is found at 42 to 111; it reads LITAIAMLGF…IMLGIVLMSM (70 aa).

This sequence belongs to the ArnE family. Heterodimer of ArnE and ArnF.

The protein localises to the cell inner membrane. It functions in the pathway bacterial outer membrane biogenesis; lipopolysaccharide biosynthesis. Functionally, translocates 4-amino-4-deoxy-L-arabinose-phosphoundecaprenol (alpha-L-Ara4N-phosphoundecaprenol) from the cytoplasmic to the periplasmic side of the inner membrane. This Proteus mirabilis (strain HI4320) protein is Probable 4-amino-4-deoxy-L-arabinose-phosphoundecaprenol flippase subunit ArnE.